The chain runs to 371 residues: Beta sliding clamp (371 aa).

It belongs to the beta sliding clamp family. Forms a ring-shaped head-to-tail homodimer around DNA which binds and tethers DNA polymerases and other proteins to the DNA. The DNA replisome complex has a single clamp-loading complex (3 tau and 1 each of delta, delta', psi and chi subunits) which binds 3 Pol III cores (1 core on the leading strand and 2 on the lagging strand) each with a beta sliding clamp dimer. Additional proteins in the replisome are other copies of gamma, psi and chi, Ssb, DNA helicase and RNA primase.

Its subcellular location is the cytoplasm. Confers DNA tethering and processivity to DNA polymerases and other proteins. Acts as a clamp, forming a ring around DNA (a reaction catalyzed by the clamp-loading complex) which diffuses in an ATP-independent manner freely and bidirectionally along dsDNA. Initially characterized for its ability to contact the catalytic subunit of DNA polymerase III (Pol III), a complex, multichain enzyme responsible for most of the replicative synthesis in bacteria; Pol III exhibits 3'-5' exonuclease proofreading activity. The beta chain is required for initiation of replication as well as for processivity of DNA replication. The sequence is that of Beta sliding clamp (dnaN) from Treponema pallidum (strain Nichols).